The following is a 519-amino-acid chain: Nitrogen fixation regulatory protein (519 aa).

The PAS 1 domain maps to 23 to 93; the sequence is LPEIFRQTVE…QALWGRLAQK (71 aa). The PAC domain maps to 94–148; that stretch reads KPWSGVLVNRRKDKTLYLAELTVAPVLNEAGETIYYLGMHRDTSELHELEQRVNN. Residues 151 to 217 form the PAS 2 domain; the sequence is LMIEAVVNAA…FETLENQGSA (67 aa). A Histidine kinase domain is found at 302–517; that stretch reads AAIHRLQGPV…RIVVELPFSA (216 aa). Position 305 is a phosphohistidine; by autocatalysis (histidine 305).

Requires FAD as cofactor.

It carries out the reaction ATP + protein L-histidine = ADP + protein N-phospho-L-histidine.. Its function is as follows. Required for the inhibition of NifA activity in response to oxygen and low level of fixed nitrogen. The chain is Nitrogen fixation regulatory protein (nifL) from Azotobacter vinelandii.